A 502-amino-acid polypeptide reads, in one-letter code: Glycerol kinase (502 aa).

T14 is an ADP binding site. ATP contacts are provided by T14, T15, and S16. Position 14 (T14) interacts with sn-glycerol 3-phosphate. R18 is an ADP binding site. Residues R84, E85, and Y136 each contribute to the sn-glycerol 3-phosphate site. Positions 84, 85, and 136 each coordinate glycerol. Residue H232 is modified to Phosphohistidine; by HPr. D246 contacts sn-glycerol 3-phosphate. Residues D246 and Q247 each coordinate glycerol. T268 and G311 together coordinate ADP. ATP-binding residues include T268, G311, Q315, and G412. ADP-binding residues include G412 and N416.

It belongs to the FGGY kinase family. Homotetramer and homodimer (in equilibrium). Post-translationally, the phosphoenolpyruvate-dependent sugar phosphotransferase system (PTS), including enzyme I, and histidine-containing protein (HPr) are required for the phosphorylation, which leads to the activation of the enzyme.

The catalysed reaction is glycerol + ATP = sn-glycerol 3-phosphate + ADP + H(+). It participates in polyol metabolism; glycerol degradation via glycerol kinase pathway; sn-glycerol 3-phosphate from glycerol: step 1/1. Activated by phosphorylation and inhibited by fructose 1,6-bisphosphate (FBP). Functionally, key enzyme in the regulation of glycerol uptake and metabolism. Catalyzes the phosphorylation of glycerol to yield sn-glycerol 3-phosphate. This is Glycerol kinase from Streptococcus pneumoniae serotype 19F (strain G54).